The following is a 326-amino-acid chain: D-alanine--D-alanine ligase (326 aa).

Residues 121–320 enclose the ATP-grasp domain; sequence ISVLRPYGIK…LKDLFGSTIE (200 aa). Position 149-204 (149-204) interacts with ATP; sequence VDKVGLPCFVKANRAGSSFGVTKVKTEDEIISAAKTAFTEDDEAIIESFLDGTEVS. Mg(2+)-binding residues include glutamate 275, glutamate 287, and asparagine 289.

Belongs to the D-alanine--D-alanine ligase family. The cofactor is Mg(2+). It depends on Mn(2+) as a cofactor.

It is found in the cytoplasm. The enzyme catalyses 2 D-alanine + ATP = D-alanyl-D-alanine + ADP + phosphate + H(+). Its pathway is cell wall biogenesis; peptidoglycan biosynthesis. Cell wall formation. This is D-alanine--D-alanine ligase from Christiangramia forsetii (strain DSM 17595 / CGMCC 1.15422 / KT0803) (Gramella forsetii).